Reading from the N-terminus, the 467-residue chain is ATP synthase subunit beta 1 (467 aa).

150 to 157 (GGAGVGKT) is a binding site for ATP.

The protein belongs to the ATPase alpha/beta chains family. F-type ATPases have 2 components, CF(1) - the catalytic core - and CF(0) - the membrane proton channel. CF(1) has five subunits: alpha(3), beta(3), gamma(1), delta(1), epsilon(1). CF(0) has three main subunits: a(1), b(2) and c(9-12). The alpha and beta chains form an alternating ring which encloses part of the gamma chain. CF(1) is attached to CF(0) by a central stalk formed by the gamma and epsilon chains, while a peripheral stalk is formed by the delta and b chains.

It is found in the cell inner membrane. The enzyme catalyses ATP + H2O + 4 H(+)(in) = ADP + phosphate + 5 H(+)(out). Produces ATP from ADP in the presence of a proton gradient across the membrane. The catalytic sites are hosted primarily by the beta subunits. The sequence is that of ATP synthase subunit beta 1 from Vibrio campbellii (strain ATCC BAA-1116).